Reading from the N-terminus, the 116-residue chain is Protein Wnt-5(I) (116 aa).

The O-palmitoleoyl serine; by PORCN moiety is linked to residue Ser-1. A glycan (N-linked (GlcNAc...) asparagine) is linked at Asn-69. Residues Cys-82 and Cys-97 are joined by a disulfide bond.

Belongs to the Wnt family. Post-translationally, palmitoleoylation is required for efficient binding to frizzled receptors. Depalmitoleoylation leads to Wnt signaling pathway inhibition.

Its subcellular location is the secreted. The protein localises to the extracellular space. It localises to the extracellular matrix. In terms of biological role, ligand for members of the frizzled family of seven transmembrane receptors. Probable developmental protein. May be a signaling molecule which affects the development of discrete regions of tissues. Is likely to signal over only few cell diameters. This chain is Protein Wnt-5(I) (WNT-5(I)), found in Eptatretus stoutii (Pacific hagfish).